The following is a 233-amino-acid chain: Small ribosomal subunit protein uS3 (233 aa).

The 69-residue stretch at 39–107 (VRQYLTKELA…PAQINIAEVR (69 aa)) folds into the KH type-2 domain.

Belongs to the universal ribosomal protein uS3 family. In terms of assembly, part of the 30S ribosomal subunit. Forms a tight complex with proteins S10 and S14.

In terms of biological role, binds the lower part of the 30S subunit head. Binds mRNA in the 70S ribosome, positioning it for translation. The sequence is that of Small ribosomal subunit protein uS3 from Citrobacter koseri (strain ATCC BAA-895 / CDC 4225-83 / SGSC4696).